The primary structure comprises 920 residues: Anoctamin-4 (920 aa).

Residues 1–323 (METSSSGITN…LYFAWLGWYT (323 aa)) are Cytoplasmic-facing. Positions 38-64 (KDDDSLLHPGNLTSTSDDASRLEAGGE) are disordered. A helical transmembrane segment spans residues 324–344 (GMLFPAAFIGLFVFLYGVITL). Residues 345 to 389 (DHCQVSKEVCQATDIIMCPVCDKYCPFMRLSDSCVYAKVTHLFDN) are Extracellular-facing. A helical membrane pass occupies residues 390–410 (GATVFFAVFMAVWATVFLEFW). The Cytoplasmic segment spans residues 411 to 470 (KRRRAVIAYDWDLIDWEEEEEEIRPQFEAKYSKKERMNPISGKPEPYQAFADKCSRLIVS). The helical transmembrane segment at 471 to 491 (ASGIFFMICVVIAAVFGIVIY) threads the bilayer. Over 492–512 (RVVTVSTFAAFKWALIRNNSQ) the chain is Extracellular. N-linked (GlcNAc...) asparagine glycosylation occurs at Asn509. Residues 513–533 (VATTGTAVCINFCIIMLLNVL) form a helical membrane-spanning segment. Over 534 to 560 (YEKVALLLTNLEQPRTESEWENSFTLK) the chain is Cytoplasmic. The chain crosses the membrane as a helical span at residues 561–581 (MFLFQFVNLNSSTFYIAFFLG). Topologically, residues 582 to 680 (RFTGHPGAYL…AYGLFDEYLE (99 aa)) are extracellular. A helical transmembrane segment spans residues 681 to 701 (MILQFGFTTIFVAAFPLAPLL). Residues 702–733 (ALLNNIIEIRLDAYKFVTQWRRPLASRAKDIG) lie on the Cytoplasmic side of the membrane. The helical transmembrane segment at 734–754 (IWYGILEGIGILSVITNAFVI) threads the bilayer. At 755–850 (AITSDFIPRL…QFWHVLAARL (96 aa)) the chain is on the extracellular side. N-linked (GlcNAc...) asparagine glycans are attached at residues Asn789 and Asn802. Residues 851 to 871 (AFIIVFEHLVFCIKHLISYLI) traverse the membrane as a helical segment. Residues 872 to 920 (PDLPKDLRDRMRREKYLIQEMMYEAELERLQKERKERKKNGKAHHNEWP) lie on the Cytoplasmic side of the membrane.

This sequence belongs to the anoctamin family.

The protein localises to the cell membrane. It catalyses the reaction a 1,2-diacyl-sn-glycero-3-phospho-L-serine(in) = a 1,2-diacyl-sn-glycero-3-phospho-L-serine(out). The catalysed reaction is a beta-D-galactosyl-(1&lt;-&gt;1')-N-acylsphing-4-enine(out) = a beta-D-galactosyl-(1&lt;-&gt;1')-N-acylsphing-4-enine(in). It carries out the reaction a 1,2-diacyl-sn-glycero-3-phosphocholine(in) = a 1,2-diacyl-sn-glycero-3-phosphocholine(out). In terms of biological role, has calcium-dependent phospholipid scramblase activity; scrambles phosphatidylserine, phosphatidylcholine and galactosylceramide. Does not exhibit calcium-activated chloride channel (CaCC) activity. In Bos taurus (Bovine), this protein is Anoctamin-4.